A 156-amino-acid polypeptide reads, in one-letter code: DNA gyrase inhibitor (156 aa).

It belongs to the DNA gyrase inhibitor family. As to quaternary structure, interacts with DNA gyrase.

The protein resides in the cytoplasm. Its function is as follows. Inhibits the supercoiling activity of DNA gyrase. Acts by inhibiting DNA gyrase at an early step, prior to (or at the step of) binding of DNA by the gyrase. It protects cells against toxins that target DNA gyrase, by inhibiting activity of these toxins and reducing the formation of lethal double-strand breaks in the cell. This is DNA gyrase inhibitor from Serratia proteamaculans (strain 568).